Reading from the N-terminus, the 96-residue chain is MTMDTAQLKSQIQQYLVESGNYELISNELKARLLQEGWVDKVKDLTKSEMNINESTNFTQILSTVEPKALEMVSDSTRETVLKQIREFLEEIVDTQ.

Residue Lys68 forms a Glycyl lysine isopeptide (Lys-Gly) (interchain with G-Cter in ubiquitin) linkage.

The protein belongs to the ENY2 family. As to quaternary structure, component of the 1.8 MDa SAGA (Spt-Ada-Gcn5 acetyltransferase) complex, which is composed of 19 subunits TRA1, SPT7, TAF5, NGG1/ADA3, SGF73, SPT20/ADA5, SPT8, TAF12, TAF6, HFI1/ADA1, UBP8, GCN5, ADA2, SPT3, SGF29, TAF10, TAF9, SGF11 and SUS1. The SAGA complex is composed of 4 modules, namely the HAT (histone acetyltransferase) module (GCN5, ADA2, NGG1/ADA3 and SGF29), the DUB (deubiquitinating) module (UBP8, SGF11, SGF73 and SUS1), the core or TAF (TBP-associated factor) module (TAF5, TAF6, TAF9, TAF10 and TAF12), and the Tra1 or SPT (Suppressor of Ty) module (TRA1, HFI1/ADA1, SPT3, SPT7, SPT8 and SPT20/ADA5). The Tra1/SPT module binds activators, the core module recruits TBP (TATA-binding protein), the HAT module contains the histone H3 acetyltransferase GCN5, and the DUB module comprises the histone H2B deubiquitinase UBP8. Also identified in an altered form of SAGA, named SALSA (SAGA altered, Spt8 absent) or SLIK (SAGA-like) complex, which contains a C-terminal truncated form of SPT7 and is missing SPT8. However, it has been shown that the SAGA and SAGA-like SALSA/SLIK transcriptional coactivators are structurally and biochemically equivalent. Component of the nuclear pore complex (NPC)-associated TREX-2 complex (transcription and export complex 2), composed of at least SUS1, SAC3, THP1, SEM1, and CDC31. TREX-2 contains 2 SUS1 chains. The TREX-2 complex interacts with the mRNA export factors MEX67, MTR2 and SUB2, and the nucleoporin NUP1. Interacts directly with THP1, SAC3. Interacts directly with SGF11 and UBP8. Interacts with YRA1, MEX67 and with the RNA polymerase II.

Its subcellular location is the nucleus. It is found in the nucleoplasm. It localises to the cytoplasm. The protein localises to the P-body. In terms of biological role, involved in mRNA export coupled transcription activation by association with both the TREX-2 and the SAGA complexes. SAGA acts as a general cofactor required for essentially all RNA polymerase II transcription. At the promoters, SAGA is required for transcription pre-initiation complex (PIC) recruitment. It influences RNA polymerase II transcriptional activity through different activities such as TBP interaction (via core/TAF module) and promoter selectivity, interaction with transcription activators (via Tra1/SPT module), and chromatin modification through histone acetylation (via HAT module) and deubiquitination (via DUB module). SAGA preferentially acetylates histones H3 (to form H3K9ac, H3K14ac, H3K18ac and H3K23ac) and H2B and deubiquitinates histone H2B. SAGA interacts with DNA via upstream activating sequences (UASs). Also identified in a modified version of SAGA named SALSA or SLIK. The cleavage of SPT7 and the absence of the SPT8 subunit in SLIK neither drive any major conformational differences in its structure compared with SAGA, nor significantly affect HAT, DUB, or DNA-binding activities. Within the SAGA complex, participates in a subcomplex with SGF11, SGF73 and UBP8 required for deubiquitination of H2B and for the maintenance of steady-state H3 methylation levels. The TREX-2 complex functions in docking export-competent ribonucleoprotein particles (mRNPs) to the nuclear entrance of the nuclear pore complex (nuclear basket), by association with components of the nuclear mRNA export machinery (MEX67-MTR2 and SUB2) in the nucleoplasm and the nucleoporin NUP1 at the nuclear basket. TREX-2 participates in mRNA export and accurate chromatin positioning in the nucleus by tethering genes to the nuclear periphery. SUS1 also has a role in mRNP biogenesis and maintenance of genome integrity through preventing RNA-mediated genome instability. Has a role in response to DNA damage induced by methyl methane sulfonate (MMS) and replication arrest induced by hydroxyurea. May also be involved in cytoplasmic mRNA decay by interaction with components of P-bodies. In Saccharomyces cerevisiae (strain ATCC 204508 / S288c) (Baker's yeast), this protein is SAGA complex subunit SUS1.